Consider the following 211-residue polypeptide: Uridine kinase (211 aa).

Gly-12–Thr-19 is a binding site for ATP.

Belongs to the uridine kinase family.

The protein resides in the cytoplasm. The catalysed reaction is uridine + ATP = UMP + ADP + H(+). It carries out the reaction cytidine + ATP = CMP + ADP + H(+). Its pathway is pyrimidine metabolism; CTP biosynthesis via salvage pathway; CTP from cytidine: step 1/3. It participates in pyrimidine metabolism; UMP biosynthesis via salvage pathway; UMP from uridine: step 1/1. The chain is Uridine kinase from Halalkalibacterium halodurans (strain ATCC BAA-125 / DSM 18197 / FERM 7344 / JCM 9153 / C-125) (Bacillus halodurans).